The chain runs to 333 residues: 2-oxoglutarate-dependent dioxygenase ucsF (333 aa).

Positions 174 to 296 constitute a Fe2OG dioxygenase domain; the sequence is NASELRLNHY…RYSIAYLCKA (123 aa). Residues His202, Asp204, and His264 each coordinate Fe cation. Arg287 lines the 2-oxoglutarate pocket.

This sequence belongs to the iron/ascorbate-dependent oxidoreductase family. Fe(2+) serves as cofactor.

Its pathway is mycotoxin biosynthesis. In terms of biological role, 2-oxoglutarate-dependent dioxygenase; part of the gene cluster that mediates the biosynthesis of UCS1025A, a member of the pyrrolizidinone family that acts as a strong telomerase inhibitor and displays potent antibacterial and antitumor properties. These compounds share a hemiaminal-containing pyrrolizidinone core fused with a gamma-lactone, giving a furopyrrolizidine that is connected to a decalin fragment. The polyketide synthase module (PKS) of the PKS-NRPS ucsA is responsible for the synthesis of the polyketide backbone via the condensation of an acetyl-CoA starter unit with 6 malonyl-CoA units. The downstream nonribosomal peptide synthetase (NRPS) module then amidates the carboxyl end of the polyketide with a 2S,3S-methylproline derived from L-isoleucine by the 2-oxoglutarate-dependent dioxygenase ucsF which converts L-isoleucine to (4S,5S)-4-methylpyrroline-5-carboxylate that is further converted to 2S,3S-methylproline by the pyrroline-5-carboxylate reductase ucsG. Reductive release of the completed aminoacyl polyketide from the assembly line can form the 3-pyrrolin-2-one structure via an intramolecular Knoevenagel reaction. Because ucsA lacks a designated enoylreductase (ER) domain, the required activity is provided the enoyl reductase ucsL. This keto acyclic precursor is the substrate of the Diels-Alderase ucsH, that catalyzes the Diels-Alder cycloaddition. Oxidation of the 3S-methyl group to a carboxylate by the cytochrome P450 monooxygenase ucsK allows an oxa-Michael cyclization that might involve the reductase/dehydrogenase ucsI and which furnishes the furopyrrolizidine. The oxidase ucsJ likely plays a critical role in stereoselective reduction of the C5-C6 double bond to afford the required R-configured carboxylate group. Further enolization and oxidation at C5 by an unidentified enzyme affords the last intermediate that can undergo oxa-Michael cyclization to yield UCS1025A. In Acremonium sp, this protein is 2-oxoglutarate-dependent dioxygenase ucsF.